Here is a 1035-residue protein sequence, read N- to C-terminus: MGGCEVREFLLQFGFFLPLLTAWTGDCSHVSNQVVLLDTSTVMGELGWKTYPLNGWDAITEMDEHNRPIHTYQVCNVMEPNQNNWLRTNWISRDAAQKIYVEMKFTLRDCNSIPWVLGTCKETFTLYYIESDESHGTKFKPSQYIKIDTIAADESFTQMDLGDRILKLNTEVREVGPIERKGFYLAFQDIGACIALVSVRVFYKKCPFTVRNLAMFPDTIPRVDSSSLVEVRGSCVKSSEERDTPKLYCGADGDWLVPLGRCICTTGYEEIEGSCHACRPGFYKAFAGNTKCSKCPPHSSTFVEATSVCHCEKGYFRAEKDPPSMACTRPPSAPRNVAFNINETALILEWSPPSDTGGRKDLTYSVICKKCGVDASQCEDCGAGLRFIPRPTGLINNSVVVLDFVSHVNYTFEIEAMNGVSELSISPKPFTAITVTTDQDAPSLIGMMRKDWASQNSLALSWQAPAFSNGAILDYEIKYYEKEHEQLTYSSTRSKAPSVIITGLKPATTYIFHIRVRTATGYSGYSQKFEFETGDETSDMAAEQGQILVIATAAVGGFTLLVILTLFFLITGRCQWYIKAKMKSEEKRRTHLQNSHLRFPGIKTYIDPDTYEDPSLAVHEFEKEIDPSRIRIERVIGAGEFGEVCSGRLKTPGKREIPVAIKTLKGGHMDRQRRDFLREASIMGQFDHPNIIRLEGVVTKRSFPAIGVEAFCPSFLRAGFLNGIQAPHPVTAGGSLPPRIPAGRPVMIVVEYMENGSLDSFLRKHDGHFTVIQLVGMLRGIASGMKYLSDMGYVHRDLAARNILVNSNLVCKVSDFGLSRVLEDDPEAAYTTTGGKIPIRWTAPEAIAYRKFSSASDVWSYGIVMWEVMSYGERPYWEMSNQDVILSIEEGYRLPAPMGCPPSLHQLMLHCWQKERNHRPKFTDIVSFLDKLIRNPSALHTLVEDILVMPESPGDVPEYPLFVTVGDWLDSIKMGQYKSNFMAAGFTTFDLISRMSIEDIRRIGVILIGHQRRIVSSIQTLRLHMMHIQEKGFHV.

The signal sequence occupies residues 1–22 (MGGCEVREFLLQFGFFLPLLTA). Topologically, residues 23-549 (WTGDCSHVSN…MAAEQGQILV (527 aa)) are extracellular. The Eph LBD domain occupies 33-211 (QVVLLDTSTV…FYKKCPFTVR (179 aa)). Fibronectin type-III domains lie at 330 to 440 (PPSA…TDQD) and 441 to 536 (APSL…TGDE). 3 N-linked (GlcNAc...) asparagine glycosylation sites follow: asparagine 342, asparagine 396, and asparagine 409. The helical transmembrane segment at 550 to 570 (IATAAVGGFTLLVILTLFFLI) threads the bilayer. Topologically, residues 571-1035 (TGRCQWYIKA…MHIQEKGFHV (465 aa)) are cytoplasmic. Phosphotyrosine; by autocatalysis is present on residues tyrosine 605 and tyrosine 611. The region spanning 630–943 (IRIERVIGAG…RNPSALHTLV (314 aa)) is the Protein kinase domain. ATP is bound by residues 636–644 (IGAGEFGEV) and lysine 662. Aspartate 797 serves as the catalytic Proton acceptor. Phosphotyrosine; by autocatalysis is present on residues tyrosine 830 and tyrosine 977. In terms of domain architecture, SAM spans 960–1024 (PLFVTVGDWL…VSSIQTLRLH (65 aa)). The PDZ-binding signature appears at 1033–1035 (FHV).

The protein belongs to the protein kinase superfamily. Tyr protein kinase family. Ephrin receptor subfamily. In terms of assembly, heterotetramer upon binding of the ligand. The heterotetramer is composed of an ephrin dimer and a receptor dimer. Oligomerization is probably required to induce biological responses. Interacts (via SAM domain) with ANKS1A (via SAM domain). In terms of tissue distribution, brain.

The protein localises to the membrane. The enzyme catalyses L-tyrosyl-[protein] + ATP = O-phospho-L-tyrosyl-[protein] + ADP + H(+). Its function is as follows. Receptor tyrosine kinase which binds promiscuously GPI-anchored ephrin-A family ligands residing on adjacent cells, leading to contact-dependent bidirectional signaling into neighboring cells. The signaling pathway downstream of the receptor is referred to as forward signaling while the signaling pathway downstream of the ephrin ligand is referred to as reverse signaling. The sequence is that of Ephrin type-A receptor 6 (Epha6) from Rattus norvegicus (Rat).